A 270-amino-acid chain; its full sequence is Interleukin-33 (270 aa).

Residues 1–65 (MKPKMKYSTN…EACYFRRETT (65 aa)) form a homeodomain-like HTH domain region. Residues 1-94 (MKPKMKYSTN…CQQQSTVESF (94 aa)) constitute a propeptide that is removed on maturation. Positions 64–111 (TTKRPSLKTDRKHKRHLVLAACQQQSTVESFAFGISGVQKYTRALHDS) are interaction with RELA.

This sequence belongs to the IL-1 family. Highly divergent. In terms of assembly, forms a 1:1:1 heterotrimeric complex with its primary high-affinity receptor IL1RL1 and the coreceptor IL1RAP. Interacts with cargo receptor TMED10; the interaction mediates the translocation from the cytoplasm into the ERGIC (endoplasmic reticulum-Golgi intermediate compartment) and thereby secretion. In terms of processing, the full-length protein can be released from cells and is able to signal via the IL1RL1/ST2 receptor. However, proteolytic processing by CELA1, CSTG/cathepsin G and ELANE/neutrophil elastase produces C-terminal peptides that are more active than the unprocessed full-length protein. May also be proteolytically processed by calpains. Proteolytic cleavage mediated by apoptotic caspases including CASP3 and CASP7 results in IL33 inactivation. In vitro proteolytic cleavage by CASP1 was reported but could not be confirmed in vivo suggesting that IL33 is probably not a direct substrate for that caspase.

It localises to the nucleus. Its subcellular location is the chromosome. The protein resides in the cytoplasm. It is found in the cytoplasmic vesicle. The protein localises to the secretory vesicle. It localises to the secreted. In terms of biological role, cytokine that binds to and signals through the IL1RL1/ST2 receptor which in turn activates NF-kappa-B and MAPK signaling pathways in target cells. Involved in the maturation of Th2 cells inducing the secretion of T-helper type 2-associated cytokines. Also involved in activation of mast cells, basophils, eosinophils and natural killer cells. Acts as a chemoattractant for Th2 cells, and may function as an 'alarmin', that amplifies immune responses during tissue injury. Induces rapid UCP2-dependent mitochondrial rewiring that attenuates the generation of reactive oxygen species and preserves the integrity of Krebs cycle required for persistent production of itaconate and subsequent GATA3-dependent differentiation of inflammation-resolving alternatively activated macrophages. Its function is as follows. In quiescent endothelia the uncleaved form is constitutively and abundantly expressed, and acts as a chromatin-associated nuclear factor with transcriptional repressor properties, it may sequester nuclear NF-kappaB/RELA, lowering expression of its targets. This form is rapidely lost upon angiogenic or pro-inflammatory activation. This chain is Interleukin-33 (IL33), found in Pongo abelii (Sumatran orangutan).